A 126-amino-acid polypeptide reads, in one-letter code: LWamide neuropeptides (126 aa).

The propeptide at 1 to 2 is 1; the sequence is KR. Positions 1 to 126 are disordered; it reads KRQQPGLWGR…KSAIPKAKPQ (126 aa). Trp-8 carries the post-translational modification Tryptophan amide. Residues 11-15 constitute a propeptide, 2; the sequence is SADPQ. Trp-20 and Trp-29 each carry tryptophan amide. The propeptide at 32–36 is 2; that stretch reads SADPQ. A tryptophan amide mark is found at Trp-41 and Trp-50. Positions 53 to 57 are cleaved as a propeptide — 2; the sequence is SADPQ. Trp-62 and Trp-71 each carry tryptophan amide. The propeptide at 74–78 is 2; the sequence is SADPQ. Trp-83 is subject to Tryptophan amide. A propeptide spans 86–93 (3); sequence SAGSGKRQ. Tryptophan amide is present on Trp-99. A propeptide spans 102–126 (4); it reads SAEPPQYKELEDLKQKSAIPKAKPQ. Basic and acidic residues predominate over residues 107–116; it reads QYKELEDLKQ.

This sequence belongs to the LWamide neuropeptide family.

It localises to the secreted. In terms of biological role, metamorphosin A may be part of an internal signaling system involved in control of metamorphosis. The protein is LWamide neuropeptides of Anemonia sulcata (Mediterranean snakelocks sea anemone).